We begin with the raw amino-acid sequence, 155 residues long: Small ribosomal subunit protein uS7cz/uS7cy (155 aa).

The protein belongs to the universal ribosomal protein uS7 family. Part of the 30S ribosomal subunit.

The protein resides in the plastid. Its subcellular location is the chloroplast. One of the primary rRNA binding proteins, it binds directly to 16S rRNA where it nucleates assembly of the head domain of the 30S subunit. The protein is Small ribosomal subunit protein uS7cz/uS7cy (rps7-A) of Atropa belladonna (Belladonna).